A 149-amino-acid chain; its full sequence is Transcription antitermination protein NusB (149 aa).

It belongs to the NusB family.

Its function is as follows. Involved in transcription antitermination. Required for transcription of ribosomal RNA (rRNA) genes. Binds specifically to the boxA antiterminator sequence of the ribosomal RNA (rrn) operons. The chain is Transcription antitermination protein NusB from Chromobacterium violaceum (strain ATCC 12472 / DSM 30191 / JCM 1249 / CCUG 213 / NBRC 12614 / NCIMB 9131 / NCTC 9757 / MK).